The sequence spans 256 residues: Type III pantothenate kinase (256 aa).

ATP is bound at residue 6-13 (DVGNTNMV). Substrate-binding positions include Tyr100 and 107 to 110 (GADR). Asp109 functions as the Proton acceptor in the catalytic mechanism. K(+) is bound at residue Asp129. Thr132 contacts ATP. Substrate is bound at residue Thr184.

This sequence belongs to the type III pantothenate kinase family. Homodimer. NH4(+) serves as cofactor. The cofactor is K(+).

It localises to the cytoplasm. It carries out the reaction (R)-pantothenate + ATP = (R)-4'-phosphopantothenate + ADP + H(+). Its pathway is cofactor biosynthesis; coenzyme A biosynthesis; CoA from (R)-pantothenate: step 1/5. In terms of biological role, catalyzes the phosphorylation of pantothenate (Pan), the first step in CoA biosynthesis. In Clostridioides difficile (strain 630) (Peptoclostridium difficile), this protein is Type III pantothenate kinase.